Consider the following 175-residue polypeptide: D-glycero-beta-D-manno-heptose-1,7-bisphosphate 7-phosphatase (175 aa).

Aspartate 7 (nucleophile) is an active-site residue. Mg(2+) is bound by residues aspartate 7 and aspartate 9. Substrate-binding positions include 7-9 (DRD), 15-19 (DSDAY), and 50-53 (TNQS). The active-site Proton donor is the aspartate 9. Residues cysteine 89, histidine 91, cysteine 97, and cysteine 99 each contribute to the Zn(2+) site. 100-101 (RK) lines the substrate pocket. Aspartate 126 is a binding site for Mg(2+).

This sequence belongs to the gmhB family. In terms of assembly, monomer. Mg(2+) serves as cofactor. It depends on Zn(2+) as a cofactor.

It localises to the cytoplasm. The enzyme catalyses D-glycero-beta-D-manno-heptose 1,7-bisphosphate + H2O = D-glycero-beta-D-manno-heptose 1-phosphate + phosphate. The protein operates within nucleotide-sugar biosynthesis; ADP-L-glycero-beta-D-manno-heptose biosynthesis; ADP-L-glycero-beta-D-manno-heptose from D-glycero-beta-D-manno-heptose 7-phosphate: step 2/4. It functions in the pathway bacterial outer membrane biogenesis; LPS core biosynthesis. In terms of biological role, converts the D-glycero-beta-D-manno-heptose 1,7-bisphosphate (beta-HBP) intermediate into D-glycero-beta-D-manno-heptose 1-phosphate by removing the phosphate group at the C-7 position. The protein is D-glycero-beta-D-manno-heptose-1,7-bisphosphate 7-phosphatase of Pseudomonas putida (strain ATCC 47054 / DSM 6125 / CFBP 8728 / NCIMB 11950 / KT2440).